The sequence spans 147 residues: Transcriptional regulator MraZ (147 aa).

2 SpoVT-AbrB domains span residues 5–52 (SHAI…PETE) and 81–124 (ATTL…SEEA).

This sequence belongs to the MraZ family. As to quaternary structure, forms oligomers.

The protein resides in the cytoplasm. It localises to the nucleoid. This is Transcriptional regulator MraZ from Saccharophagus degradans (strain 2-40 / ATCC 43961 / DSM 17024).